The primary structure comprises 542 residues: MARYIFITGGVVSSLGKGIAAATLAALLQARGYRVRLRKLDPYLNVDPGTMSPYQHGEVFVTDDGAETDLDLGHYERFTGHSANSQDNITTGRIYRNIIERERRGDYLGATVQVIPHVTDEIKRFITTGNEEFDFILCEIGGTVGDIEAMPFLEAIRQLHNELPRQSVIYVHLTLMPYISSVGELKTKPTQHSVKELQSIGISPDILLVRADRPIPETERCKLSLFCNVRPSAVIQALNMPTIYDVPMAYHKEGLDSEVLCAFGIDPTPKPKMDRWEDITYRIHHLEGEVTIAVVGKYTGLKDAYKSLIEAIAHGGLANKVKVNIEWIEAELFEKEDPASYLQKVHGILVPGAFGARGAEGKIQAIQFARERKVPFLGICFGMQLACIEVARNIAKIENASSSEFCETKNPIVGLMTEWLKEDVLEKRAKCGNLGGTMRLGAFAAELKEGSHIAKIYGMTRILERHRHRYEVNVDYKDKLEQCGLIFSGMSPDGVLPEAIEYADHPWFIGVQYHPELKSRPFDPHPLFSSFIEATVEQSRLV.

The tract at residues 1–265 (MARYIFITGG…DSEVLCAFGI (265 aa)) is amidoligase domain. Serine 13 lines the CTP pocket. Serine 13 serves as a coordination point for UTP. An ATP-binding site is contributed by 14 to 19 (SLGKGI). Tyrosine 54 serves as a coordination point for L-glutamine. Residue aspartate 71 participates in ATP binding. Residues aspartate 71 and glutamate 139 each contribute to the Mg(2+) site. Residues 146–148 (DIE), 186–191 (KTKPTQ), and lysine 222 each bind CTP. UTP is bound by residues 186–191 (KTKPTQ) and lysine 222. The 251-residue stretch at 291-541 (TIAVVGKYTG…IEATVEQSRL (251 aa)) folds into the Glutamine amidotransferase type-1 domain. An L-glutamine-binding site is contributed by alanine 353. The active-site Nucleophile; for glutamine hydrolysis is the cysteine 380. L-glutamine is bound by residues 381–384 (FGMQ), glutamate 404, and arginine 469. Catalysis depends on residues histidine 514 and glutamate 516.

This sequence belongs to the CTP synthase family. In terms of assembly, homotetramer.

The catalysed reaction is UTP + L-glutamine + ATP + H2O = CTP + L-glutamate + ADP + phosphate + 2 H(+). It carries out the reaction L-glutamine + H2O = L-glutamate + NH4(+). The enzyme catalyses UTP + NH4(+) + ATP = CTP + ADP + phosphate + 2 H(+). It functions in the pathway pyrimidine metabolism; CTP biosynthesis via de novo pathway; CTP from UDP: step 2/2. With respect to regulation, allosterically activated by GTP, when glutamine is the substrate; GTP has no effect on the reaction when ammonia is the substrate. The allosteric effector GTP functions by stabilizing the protein conformation that binds the tetrahedral intermediate(s) formed during glutamine hydrolysis. Inhibited by the product CTP, via allosteric rather than competitive inhibition. Catalyzes the ATP-dependent amination of UTP to CTP with either L-glutamine or ammonia as the source of nitrogen. Regulates intracellular CTP levels through interactions with the four ribonucleotide triphosphates. The protein is CTP synthase of Bartonella quintana (strain Toulouse) (Rochalimaea quintana).